Reading from the N-terminus, the 782-residue chain is DnaJ homolog subfamily C member 16 (782 aa).

A signal peptide spans 1-25 (MEVRKLSISWQFLIVLVLILQILSA). Topologically, residues 26–535 (LDFDPYRVLG…DSIFHNNWRE (510 aa)) are cytoplasmic. The J domain maps to 29–93 (DPYRVLGVSR…EKRSNYDQYG (65 aa)). The Thioredoxin domain maps to 119–247 (FYFDESFFHF…LRQFVESLLP (129 aa)). Residues 536–556 (MMPLLSLIFSALFILFGTVIV) traverse the membrane as a helical; Anchor for type IV membrane protein segment. The Extracellular segment spans residues 557–782 (QAFSDSNDER…FYIPSWPELD (226 aa)). Residues 562-593 (SNDERESSPPEKEEAQEKTGKTEPSFTKENSS) are disordered. Residues 563-582 (NDERESSPPEKEEAQEKTGK) are compositionally biased toward basic and acidic residues. Residues 583 to 593 (TEPSFTKENSS) show a composition bias toward polar residues. Asparagine 631 carries N-linked (GlcNAc...) asparagine glycosylation.

The protein resides in the endoplasmic reticulum membrane. Plays an important role in regulating the size of autophagosomes during the formation process. This is DnaJ homolog subfamily C member 16 (DNAJC16) from Homo sapiens (Human).